Consider the following 188-residue polypeptide: Elongation factor P (188 aa).

An N6-(3,6-diaminohexanoyl)-5-hydroxylysine modification is found at lysine 34.

Belongs to the elongation factor P family. In terms of processing, may be beta-lysylated on the epsilon-amino group of Lys-34 by the combined action of EpmA and EpmB, and then hydroxylated on the C5 position of the same residue by EpmC (if this protein is present). Lysylation is critical for the stimulatory effect of EF-P on peptide-bond formation. The lysylation moiety may extend toward the peptidyltransferase center and stabilize the terminal 3-CCA end of the tRNA. Hydroxylation of the C5 position on Lys-34 may allow additional potential stabilizing hydrogen-bond interactions with the P-tRNA.

The protein localises to the cytoplasm. It functions in the pathway protein biosynthesis; polypeptide chain elongation. In terms of biological role, involved in peptide bond synthesis. Alleviates ribosome stalling that occurs when 3 or more consecutive Pro residues or the sequence PPG is present in a protein, possibly by augmenting the peptidyl transferase activity of the ribosome. Modification of Lys-34 is required for alleviation. This Hamiltonella defensa subsp. Acyrthosiphon pisum (strain 5AT) protein is Elongation factor P.